The primary structure comprises 107 residues: MLTQQLLSIGVNHFLTISVILFGLGMFAVMTRKNAIVILMGVELILNAANINFLTFSKYNGGMEGVMFSLFVIVLAAAEAAIALAIVINIFKTFKTVDVSSVDTMKE.

A run of 3 helical transmembrane segments spans residues 9–29 (IGVN…MFAV), 36–56 (IVIL…FLTF), and 68–88 (FSLF…AIVI).

Belongs to the complex I subunit 4L family. In terms of assembly, NDH-1 is composed of 14 different subunits. Subunits NuoA, H, J, K, L, M, N constitute the membrane sector of the complex.

It is found in the cell inner membrane. It carries out the reaction a quinone + NADH + 5 H(+)(in) = a quinol + NAD(+) + 4 H(+)(out). NDH-1 shuttles electrons from NADH, via FMN and iron-sulfur (Fe-S) centers, to quinones in the respiratory chain. The immediate electron acceptor for the enzyme in this species is believed to be a menaquinone. Couples the redox reaction to proton translocation (for every two electrons transferred, four hydrogen ions are translocated across the cytoplasmic membrane), and thus conserves the redox energy in a proton gradient. The protein is NADH-quinone oxidoreductase subunit K of Chlorobaculum tepidum (strain ATCC 49652 / DSM 12025 / NBRC 103806 / TLS) (Chlorobium tepidum).